A 415-amino-acid chain; its full sequence is Thyroxine-binding globulin (415 aa).

The signal sequence occupies residues M1–C20. Residue N36 is glycosylated (N-linked (GlcNAc...) (complex) asparagine). A glycan (N-linked (GlcNAc...) asparagine) is linked at N99. A glycan (N-linked (GlcNAc...) asparagine; in variant Gary) is linked at I116. N-linked (GlcNAc...) asparagine glycosylation is found at N165 and N253. Positions 293 and 398 each coordinate thyroxine.

It belongs to the serpin family. As to expression, expressed by the liver and secreted in plasma.

It localises to the secreted. Its function is as follows. Major thyroid hormone transport protein in serum. The sequence is that of Thyroxine-binding globulin (SERPINA7) from Homo sapiens (Human).